The sequence spans 97 residues: HssA/B-like protein 48 (97 aa).

Disordered regions lie at residues 1–20 and 78–97; these read MTLF…SKSS and GSGY…CCGI.

Belongs to the hssA/B family.

This chain is HssA/B-like protein 48 (hssl48), found in Dictyostelium discoideum (Social amoeba).